Here is a 353-residue protein sequence, read N- to C-terminus: GTPase Obg (353 aa).

Residues 1-159 (MKFLDEAKVY…RWIWLRLKLI (159 aa)) form the Obg domain. In terms of domain architecture, OBG-type G spans 160 to 327 (ADAGLVGLPN…ALRALAAVIG (168 aa)). GTP is bound by residues 166–173 (GLPNAGKS), 191–195 (FTTLH), 212–215 (DIPG), 279–282 (NKID), and 308–310 (SGV). Residues Ser173 and Thr193 each contribute to the Mg(2+) site.

This sequence belongs to the TRAFAC class OBG-HflX-like GTPase superfamily. OBG GTPase family. In terms of assembly, monomer. Mg(2+) is required as a cofactor.

Its subcellular location is the cytoplasm. Its function is as follows. An essential GTPase which binds GTP, GDP and possibly (p)ppGpp with moderate affinity, with high nucleotide exchange rates and a fairly low GTP hydrolysis rate. Plays a role in control of the cell cycle, stress response, ribosome biogenesis and in those bacteria that undergo differentiation, in morphogenesis control. The protein is GTPase Obg of Rhodopseudomonas palustris (strain BisB5).